The following is a 317-amino-acid chain: Transaldolase (317 aa).

Lysine 132 (schiff-base intermediate with substrate) is an active-site residue.

The protein belongs to the transaldolase family. Type 1 subfamily. As to quaternary structure, homodimer.

Its subcellular location is the cytoplasm. It carries out the reaction D-sedoheptulose 7-phosphate + D-glyceraldehyde 3-phosphate = D-erythrose 4-phosphate + beta-D-fructose 6-phosphate. Its pathway is carbohydrate degradation; pentose phosphate pathway; D-glyceraldehyde 3-phosphate and beta-D-fructose 6-phosphate from D-ribose 5-phosphate and D-xylulose 5-phosphate (non-oxidative stage): step 2/3. In terms of biological role, transaldolase is important for the balance of metabolites in the pentose-phosphate pathway. In Haemophilus influenzae (strain PittEE), this protein is Transaldolase.